The sequence spans 215 residues: MRGVAEEKTLLEVIIQELRRAAEEESRRIVKEAEQEAQKIVEEAIQKAEAIKAEKLNQLLNEYRQKAMAELAPKRLELRHRAIREKHELIESALNRAIEEAVKTILGNDDYRRTFLEKSLEKGVVALSSTDLVVHPCRGSASIVGQVVEAVAARLSKVKPGLRLEIGDPLGCTEGVVIVSRDGREIYNATLEAKIAEVRESVKPKVLELVSRARA.

This sequence belongs to the V-ATPase E subunit family. Has multiple subunits with at least A(3), B(3), C, D, E, F, H, I and proteolipid K(x).

The protein localises to the cell membrane. Functionally, component of the A-type ATP synthase that produces ATP from ADP in the presence of a proton gradient across the membrane. This is A-type ATP synthase subunit E from Thermofilum pendens (strain DSM 2475 / Hrk 5).